The sequence spans 354 residues: MSSATAAATATIAAAAAKLAATPAPAPSRRRLTLRGNPTARRCVAAMAVSTPRSAAAAAFLERRESERALHFVKYQGLGNDFIMVDNRDSAVPKVTPEEAAKLCDRNFGVGADGVIFVMPGVNGADYTMRIFNSDGSEPEMCGNGVRCFARFIAELENLQGTHSFKIHTGAGLIIPEIQNDGKVKVDMGQPILSGPDIPTKLPSTKNEAVVQADLAVDGSTWQVTCVSMGNPHCVTFGTKELKVLHVDDLKLSDIGPKFEHHEMFPARTNTEFVEVLSRSHLKMRVWERGAGATLACGTGACAVVVAAVLEGRAERKCVVDLPGGPLEIEWREDDNHIYMTGPAEAVFYGSAVH.

A chloroplast-targeting transit peptide spans 1–44 (MSSATAAATATIAAAAAKLAATPAPAPSRRRLTLRGNPTARRCV). Catalysis depends on residues C142 and C297.

This sequence belongs to the diaminopimelate epimerase family.

It is found in the plastid. The protein resides in the chloroplast. The catalysed reaction is (2S,6S)-2,6-diaminopimelate = meso-2,6-diaminopimelate. It functions in the pathway amino-acid biosynthesis; L-lysine biosynthesis via DAP pathway; DL-2,6-diaminopimelate from LL-2,6-diaminopimelate: step 1/1. The sequence is that of Diaminopimelate epimerase, chloroplastic (DAPF) from Oryza sativa subsp. japonica (Rice).